The chain runs to 557 residues: Suprabasin (557 aa).

The signal sequence occupies residues Met1–Ala23. Disordered stretches follow at residues Arg150–His175, Gly422–Gln441, Ala464–Glu490, and Asn509–Thr533. Positions Gln153–His175 are enriched in low complexity. Residues Gly476–Gly487 show a composition bias toward low complexity.

Its subcellular location is the secreted. The chain is Suprabasin (SBSN) from Bos taurus (Bovine).